Here is a 418-residue protein sequence, read N- to C-terminus: D-amino acid dehydrogenase (418 aa).

3–17 (VLVLGAGVVGTTSAW) contributes to the FAD binding site.

The protein belongs to the DadA oxidoreductase family. The cofactor is FAD.

The catalysed reaction is a D-alpha-amino acid + A + H2O = a 2-oxocarboxylate + AH2 + NH4(+). Its pathway is amino-acid degradation; D-alanine degradation; NH(3) and pyruvate from D-alanine: step 1/1. Functionally, oxidative deamination of D-amino acids. This chain is D-amino acid dehydrogenase, found in Dechloromonas aromatica (strain RCB).